We begin with the raw amino-acid sequence, 243 residues long: Triosephosphate isomerase (243 aa).

9–11 (NWK) contacts substrate. Residue His96 is the Electrophile of the active site. The Proton acceptor role is filled by Glu165. Substrate-binding positions include Gly171, Ser204, and 225–226 (GG).

It belongs to the triosephosphate isomerase family. Homodimer.

Its subcellular location is the cytoplasm. It catalyses the reaction D-glyceraldehyde 3-phosphate = dihydroxyacetone phosphate. It functions in the pathway carbohydrate biosynthesis; gluconeogenesis. It participates in carbohydrate degradation; glycolysis; D-glyceraldehyde 3-phosphate from glycerone phosphate: step 1/1. In terms of biological role, involved in the gluconeogenesis. Catalyzes stereospecifically the conversion of dihydroxyacetone phosphate (DHAP) to D-glyceraldehyde-3-phosphate (G3P). The sequence is that of Triosephosphate isomerase from Prochlorococcus marinus (strain SARG / CCMP1375 / SS120).